The following is a 66-amino-acid chain: Sodium channel alpha-toxin Acra8 (66 aa).

The region spanning 2–64 is the LCN-type CS-alpha/beta domain; that stretch reads RDGYIVDDKN…VPIKEKGRCN (63 aa). 4 cysteine pairs are disulfide-bonded: Cys-12/Cys-63, Cys-16/Cys-36, Cys-22/Cys-46, and Cys-26/Cys-48. Asn-64 carries the post-translational modification Asparagine amide. Positions 65-66 are excised as a propeptide; that stretch reads GR.

The protein belongs to the long (4 C-C) scorpion toxin superfamily. Sodium channel inhibitor family. Alpha subfamily. Expressed by the venom gland.

The protein resides in the secreted. Functionally, alpha toxins bind voltage-independently at site-3 of sodium channels (Nav) and inhibit the inactivation of the activated channels, thereby blocking neuronal transmission. The protein is Sodium channel alpha-toxin Acra8 of Androctonus crassicauda (Arabian fat-tailed scorpion).